The chain runs to 223 residues: Deoxyribose-phosphate aldolase (223 aa).

Residue Asp92 is the Proton donor/acceptor of the active site. Residue Lys158 is the Schiff-base intermediate with acetaldehyde of the active site. The Proton donor/acceptor role is filled by Lys188.

The protein belongs to the DeoC/FbaB aldolase family. DeoC type 1 subfamily.

It localises to the cytoplasm. It catalyses the reaction 2-deoxy-D-ribose 5-phosphate = D-glyceraldehyde 3-phosphate + acetaldehyde. Its pathway is carbohydrate degradation; 2-deoxy-D-ribose 1-phosphate degradation; D-glyceraldehyde 3-phosphate and acetaldehyde from 2-deoxy-alpha-D-ribose 1-phosphate: step 2/2. Its function is as follows. Catalyzes a reversible aldol reaction between acetaldehyde and D-glyceraldehyde 3-phosphate to generate 2-deoxy-D-ribose 5-phosphate. This Mycobacterium avium (strain 104) protein is Deoxyribose-phosphate aldolase.